Here is a 66-residue protein sequence, read N- to C-terminus: MKASDVRAFTADQLKDELAKLKKEQFNLRFQKATGQLEKSSRINEVRKDIARVKTIARQKAAEVKA.

The protein belongs to the universal ribosomal protein uL29 family.

In Rhizobium johnstonii (strain DSM 114642 / LMG 32736 / 3841) (Rhizobium leguminosarum bv. viciae), this protein is Large ribosomal subunit protein uL29.